A 336-amino-acid polypeptide reads, in one-letter code: Structure-specific endonuclease subunit SLX1 (336 aa).

The 84-residue stretch at Ser-21 to Lys-104 folds into the GIY-YIG domain. Positions Phe-37 to Lys-57 are disordered. The SLX1-type zinc finger occupies Cys-214–Cys-290.

This sequence belongs to the SLX1 family. Forms a heterodimer with SLX4. The cofactor is a divalent metal cation.

It localises to the nucleus. Functionally, catalytic subunit of the SLX1-SLX4 structure-specific endonuclease that resolves DNA secondary structures generated during DNA repair and recombination. Has endonuclease activity towards branched DNA substrates, introducing single-strand cuts in duplex DNA close to junctions with ss-DNA. The polypeptide is Structure-specific endonuclease subunit SLX1 (Scheffersomyces stipitis (strain ATCC 58785 / CBS 6054 / NBRC 10063 / NRRL Y-11545) (Yeast)).